A 1031-amino-acid polypeptide reads, in one-letter code: Caprin-2 (1031 aa).

Disordered regions lie at residues methionine 1–leucine 27, leucine 364–asparagine 458, proline 500–aspartate 520, aspartate 605–alanine 658, and arginine 830–proline 876. Polar residues-rich tracts occupy residues valine 425–threonine 439 and alanine 446–asparagine 458. Residues serine 608–serine 646 are compositionally biased toward low complexity. Over residues arginine 830–serine 853 the composition is skewed to polar residues. Serine 852 and serine 853 each carry phosphoserine. Residues proline 897 to aspartate 1031 form the C1q domain. Positions 982 and 988 each coordinate Ca(2+).

The protein belongs to the caprin family. In terms of assembly, homotrimer; via C1q domain. Found in a complex with LRP6, CCNY and CDK14 during G2/M stage; CAPRIN2 functions as a scaffold for the complex by binding to CCNY via its N terminus and to CDK14 via its C terminus. Interacts with LRP5. Interacts with LRP6. In terms of tissue distribution, specifically expressed in brain (at protein level).

The protein resides in the cytoplasm. Its subcellular location is the cell membrane. Promotes phosphorylation of the Wnt coreceptor LRP6, leading to increased activity of the canonical Wnt signaling pathway. Facilitates constitutive LRP6 phosphorylation by CDK14/CCNY during G2/M stage of the cell cycle, which may potentiate cells for Wnt signaling. May regulate the transport and translation of mRNAs, modulating for instance the expression of proteins involved in synaptic plasticity in neurons. Involved in regulation of growth as erythroblasts shift from a highly proliferative state towards their terminal phase of differentiation. May be involved in apoptosis. The protein is Caprin-2 of Mus musculus (Mouse).